A 178-amino-acid polypeptide reads, in one-letter code: Large ribosomal subunit protein uL6 (178 aa).

It belongs to the universal ribosomal protein uL6 family. As to quaternary structure, part of the 50S ribosomal subunit.

In terms of biological role, this protein binds to the 23S rRNA, and is important in its secondary structure. It is located near the subunit interface in the base of the L7/L12 stalk, and near the tRNA binding site of the peptidyltransferase center. The chain is Large ribosomal subunit protein uL6 from Streptococcus thermophilus (strain CNRZ 1066).